The primary structure comprises 142 residues: Hemoglobin subunit alpha-2 (142 aa).

Residues V2–R142 form the Globin domain. Residue H59 participates in O2 binding. H88 is a binding site for heme b.

This sequence belongs to the globin family. Heterotetramer of two alpha chains and two beta chains. In terms of tissue distribution, red blood cells.

Its function is as follows. Involved in oxygen transport from the lung to the various peripheral tissues. This Arctocephalus galapagoensis (Galapagoes fur seal) protein is Hemoglobin subunit alpha-2.